The primary structure comprises 332 residues: L-lactate dehydrogenase A chain (332 aa).

At Ala2 the chain carries N-acetylalanine. Lys5 bears the N6-acetyllysine; alternate mark. Lys5 carries the N6-succinyllysine; alternate modification. N6-acetyllysine is present on Lys14. 29–57 (GAVGMACAISILMKDLADELALVDVMEDK) contacts NAD(+). Position 57 is an N6-acetyllysine; alternate (Lys57). Lys57 participates in a covalent cross-link: Glycyl lysine isopeptide (Lys-Gly) (interchain with G-Cter in SUMO2); alternate. N6-acetyllysine is present on Lys81. Arg99 lines the NAD(+) pocket. Arg106 contributes to the substrate binding site. Lys118 carries the N6-acetyllysine; alternate modification. Residue Lys118 is modified to N6-succinyllysine; alternate. Lys126 carries the N6-acetyllysine modification. Asn138 is an NAD(+) binding site. Positions 138 and 169 each coordinate substrate. His193 acts as the Proton acceptor in catalysis. An N6-acetyllysine mark is found at Lys224 and Lys232. Tyr239 carries the post-translational modification Phosphotyrosine. Lys243 is subject to N6-acetyllysine. Thr248 contributes to the substrate binding site. Thr309 bears the Phosphothreonine mark. Lys318 carries the N6-acetyllysine; alternate modification. The residue at position 318 (Lys318) is an N6-succinyllysine; alternate. A Phosphothreonine modification is found at Thr322.

This sequence belongs to the LDH/MDH superfamily. LDH family. In terms of assembly, homotetramer. Interacts with PTEN upstream reading frame protein MP31. Post-translationally, ISGylated.

The protein localises to the cytoplasm. It carries out the reaction (S)-lactate + NAD(+) = pyruvate + NADH + H(+). It functions in the pathway fermentation; pyruvate fermentation to lactate; (S)-lactate from pyruvate: step 1/1. Interconverts simultaneously and stereospecifically pyruvate and lactate with concomitant interconversion of NADH and NAD(+). This is L-lactate dehydrogenase A chain (Ldha) from Mus musculus (Mouse).